Here is a 410-residue protein sequence, read N- to C-terminus: Adenosine receptor A2a (410 aa).

At 1–4 the chain is on the extracellular side; that stretch reads MGSS. Residues 5–29 form a helical membrane-spanning segment; the sequence is VYITVELAIAVLAILGNVLVCWAVW. Over 30–39 the chain is Cytoplasmic; sequence INSNLQNVTN. Residues 40-63 traverse the membrane as a helical segment; it reads FFVVSLAAADIAVGVLAIPFAITI. At 64-74 the chain is on the extracellular side; sequence STGFCAACHGC. 3 disulfides stabilise this stretch: C68-C154, C71-C143, and C74-C161. A helical membrane pass occupies residues 75–97; that stretch reads LFFACFVLVLTQSSIFSLLAIAI. Over 98-117 the chain is Cytoplasmic; it reads DRYIAIRIPLRYNGLVTGVR. The helical transmembrane segment at 118–140 threads the bilayer; it reads AKGIIAICWVLSFAIGLTPMLGW. The Extracellular segment spans residues 141–168; the sequence is NNCSQKDGNSTKTCGEGRVTCLFEDVVP. N-linked (GlcNAc...) asparagine glycans are attached at residues N142 and N149. E164 is an adenosine binding site. The chain crosses the membrane as a helical span at residues 169-193; sequence MNYMVYYNFFAFVLLPLLLMLAIYL. Topologically, residues 194–229 are cytoplasmic; sequence RIFLAARRQLKQMESQPLPGERTRSTLQKEVHAAKS. The helical transmembrane segment at 230–253 threads the bilayer; it reads LAIIVGLFALCWLPLHIINCFTFF. N248 contacts adenosine. C254 and C257 are joined by a disulfide. The Extracellular portion of the chain corresponds to 254–261; the sequence is CSTCRHAP. Residues 262 to 285 form a helical membrane-spanning segment; sequence PWLMYLAIILSHSNSVVNPFIYAY. Adenosine-binding residues include S272 and H273. Residues 286–410 lie on the Cytoplasmic side of the membrane; it reads RIREFRQTFR…SSWSSEFAPS (125 aa). The segment at 322 to 410 is interaction with GAS2L2; that stretch reads HSTEGEQVSL…SSWSSEFAPS (89 aa). The segment at 344 to 410 is disordered; sequence GSATHSGRRP…SSWSSEFAPS (67 aa). Over residues 371–388 the composition is skewed to basic and acidic residues; it reads RDVELPTQERQEGQEHPG. Residues 401–410 show a composition bias toward polar residues; that stretch reads SSWSSEFAPS.

Belongs to the G-protein coupled receptor 1 family. As to quaternary structure, interacts (via cytoplasmic C-terminal domain) with USP4; the interaction is direct. May interact with DRD4. Interacts with NECAB2. Interacts (via cytoplasmic C-terminal domain) with GAS2L2; interaction enhances receptor-mediated adenylyl cyclase activity. Ubiquitinated. Deubiquitinated by USP4; leading to stabilization and expression at the cell surface. As to expression, expressed in striatal neurons (at protein level).

It is found in the cell membrane. Receptor for adenosine. The activity of this receptor is mediated by G proteins which activate adenylyl cyclase. This is Adenosine receptor A2a (Adora2a) from Rattus norvegicus (Rat).